We begin with the raw amino-acid sequence, 401 residues long: Chalcone synthase 5 (401 aa).

The active site involves Cys168.

It belongs to the thiolase-like superfamily. Chalcone/stilbene synthases family.

The catalysed reaction is (E)-4-coumaroyl-CoA + 3 malonyl-CoA + 3 H(+) = 2',4,4',6'-tetrahydroxychalcone + 3 CO2 + 4 CoA. The protein operates within secondary metabolite biosynthesis; flavonoid biosynthesis. Its function is as follows. The primary product of this enzyme is 4,2',4',6'-tetrahydroxychalcone (also termed naringenin-chalcone or chalcone) which can under specific conditions spontaneously isomerize into naringenin. This chain is Chalcone synthase 5 (CHS5), found in Sorghum bicolor (Sorghum).